Consider the following 360-residue polypeptide: RGG repeats nuclear RNA binding protein B (360 aa).

Disordered stretches follow at residues methionine 1–methionine 216 and methionine 250–lysine 360. An N-acetylalanine modification is found at alanine 2. Residues proline 58–glycine 77 are compositionally biased toward gly residues. Basic and acidic residues-rich tracts occupy residues arginine 99–arginine 108 and aspartate 132–alanine 157. The span at tryptophan 162–serine 176 shows a compositional bias: polar residues. 3 stretches are compositionally biased toward basic and acidic residues: residues leucine 184–methionine 216, serine 258–arginine 283, and arginine 311–arginine 336. The FF domain occupies lysine 223 to isoleucine 288. Serine 258 carries the post-translational modification Phosphoserine.

This sequence belongs to the SERBP1-HABP4 family.

It is found in the nucleus. Its subcellular location is the cytoplasm. It localises to the perinuclear region. Functionally, ribosome-binding protein that acts as a regulator of mRNA translation by promoting ribosome inactivation. Binds RNA. This chain is RGG repeats nuclear RNA binding protein B, found in Arabidopsis thaliana (Mouse-ear cress).